Reading from the N-terminus, the 299-residue chain is Taste receptor type 2 member 19 (299 aa).

M1 is a topological domain (extracellular). The helical transmembrane segment at 2 to 22 (MCFLLIILSILVVFAFVLGNF) threads the bilayer. At 23–55 (SNGFIALVNVIDWVNTRKISSADQILTALVVSR) the chain is on the cytoplasmic side. A helical transmembrane segment spans residues 56 to 76 (IGLLWVMLFLWYATVFNSALY). The Extracellular portion of the chain corresponds to 77 to 87 (GLEVRIVASNA). The helical transmembrane segment at 88-108 (WAVMNHFSIWLAASLSIFCLL) threads the bilayer. Residues 109–127 (KIANFSNLIFLHLKKRIKS) lie on the Cytoplasmic side of the membrane. Residues 128–148 (VVLVILLGPLVFLICNLAVIT) traverse the membrane as a helical segment. The Extracellular portion of the chain corresponds to 149-181 (MDERVWTKEYEGNVTWKIKLRNAIQLSSLTVTT). N161 is a glycosylation site (N-linked (GlcNAc...) asparagine). A helical transmembrane segment spans residues 182–202 (LANLIPFTLSLICFLLLICSL). Topologically, residues 203-226 (CKHLKKMRLHSKGSQDPSTKVHIK) are cytoplasmic. Residues 227–247 (ALQTVTSFLMLFAIYFLCIIT) traverse the membrane as a helical segment. Over 248 to 259 (STWNLRTQQSKL) the chain is Extracellular. Residues 260–280 (VLLLCQTVAIMYPSFHSFILI) form a helical membrane-spanning segment. The Cytoplasmic segment spans residues 281–299 (MGSRKLKQTFLSVLWQMTR).

Belongs to the G-protein coupled receptor T2R family.

The protein localises to the membrane. Receptor that may play a role in the perception of bitterness and is gustducin-linked. May play a role in sensing the chemical composition of the gastrointestinal content. The activity of this receptor may stimulate alpha gustducin, mediate PLC-beta-2 activation and lead to the gating of TRPM5. This is Taste receptor type 2 member 19 (TAS2R19) from Pan paniscus (Pygmy chimpanzee).